The sequence spans 201 residues: Recombination protein RecR (201 aa).

Residues C60 to C75 form a C4-type zinc finger. Residues S83–P178 enclose the Toprim domain.

This sequence belongs to the RecR family.

In terms of biological role, may play a role in DNA repair. It seems to be involved in an RecBC-independent recombinational process of DNA repair. It may act with RecF and RecO. The protein is Recombination protein RecR of Rhizobium rhizogenes (strain K84 / ATCC BAA-868) (Agrobacterium radiobacter).